A 196-amino-acid polypeptide reads, in one-letter code: tRNA(Phe) 7-((3-amino-3-carboxypropyl)-4-demethylwyosine(37)-N(4))-methyltransferase 1 (196 aa).

Belongs to the TYW3 family.

It catalyses the reaction 4-demethyl-7-[(3S)-3-amino-3-carboxypropyl]wyosine(37) in tRNA(Phe) + S-adenosyl-L-methionine = 7-[(3S)-3-amino-3-carboxypropyl]wyosine(37) in tRNA(Phe) + S-adenosyl-L-homocysteine + H(+). In terms of biological role, S-adenosyl-L-methionine-dependent methyltransferase that acts as a component of the wyosine derivatives biosynthesis pathway. Probably methylates N-4 position of wybutosine-86 to produce wybutosine-72. In Pyrococcus furiosus (strain ATCC 43587 / DSM 3638 / JCM 8422 / Vc1), this protein is tRNA(Phe) 7-((3-amino-3-carboxypropyl)-4-demethylwyosine(37)-N(4))-methyltransferase 1.